A 428-amino-acid chain; its full sequence is 3-phosphoshikimate 1-carboxyvinyltransferase (428 aa).

Positions 21, 22, and 26 each coordinate 3-phosphoshikimate. Phosphoenolpyruvate is bound at residue lysine 21. Phosphoenolpyruvate is bound by residues glycine 91 and arginine 119. Serine 164, glutamine 166, aspartate 313, and lysine 340 together coordinate 3-phosphoshikimate. Phosphoenolpyruvate is bound at residue glutamine 166. The active-site Proton acceptor is the aspartate 313. The phosphoenolpyruvate site is built by arginine 344 and arginine 386.

Belongs to the EPSP synthase family. Monomer.

Its subcellular location is the cytoplasm. The enzyme catalyses 3-phosphoshikimate + phosphoenolpyruvate = 5-O-(1-carboxyvinyl)-3-phosphoshikimate + phosphate. It functions in the pathway metabolic intermediate biosynthesis; chorismate biosynthesis; chorismate from D-erythrose 4-phosphate and phosphoenolpyruvate: step 6/7. Catalyzes the transfer of the enolpyruvyl moiety of phosphoenolpyruvate (PEP) to the 5-hydroxyl of shikimate-3-phosphate (S3P) to produce enolpyruvyl shikimate-3-phosphate and inorganic phosphate. In Campylobacter jejuni subsp. jejuni serotype O:2 (strain ATCC 700819 / NCTC 11168), this protein is 3-phosphoshikimate 1-carboxyvinyltransferase.